The primary structure comprises 446 residues: Exodeoxyribonuclease 7 large subunit (446 aa).

Belongs to the XseA family. Heterooligomer composed of large and small subunits.

It is found in the cytoplasm. The catalysed reaction is Exonucleolytic cleavage in either 5'- to 3'- or 3'- to 5'-direction to yield nucleoside 5'-phosphates.. Bidirectionally degrades single-stranded DNA into large acid-insoluble oligonucleotides, which are then degraded further into small acid-soluble oligonucleotides. This chain is Exodeoxyribonuclease 7 large subunit, found in Xanthomonas campestris pv. campestris (strain 8004).